Here is a 209-residue protein sequence, read N- to C-terminus: Large ribosomal subunit protein bL25 (209 aa).

The segment at 185-209 is disordered; that stretch reads SKATTGEEEGAEAAGEGEEAEEKPE. Residues 190–209 show a composition bias toward acidic residues; that stretch reads GEEEGAEAAGEGEEAEEKPE.

It belongs to the bacterial ribosomal protein bL25 family. CTC subfamily. As to quaternary structure, part of the 50S ribosomal subunit; part of the 5S rRNA/L5/L18/L25 subcomplex. Contacts the 5S rRNA. Binds to the 5S rRNA independently of L5 and L18.

Its function is as follows. This is one of the proteins that binds to the 5S RNA in the ribosome where it forms part of the central protuberance. In Syntrophomonas wolfei subsp. wolfei (strain DSM 2245B / Goettingen), this protein is Large ribosomal subunit protein bL25.